A 705-amino-acid chain; its full sequence is MDADKEKDLQKFLKNVDEISNLIQEMNSDDPVVQQKAVLETEKRLLLMEEDQEEDECRTTLNKTMISPPQTAMKSAEEINSEAFLASVEKDAKERAKRRRENKVLADALKEKGNEAFAEGNYETAILRYSEGLEKLKDMKVLYTNRAQAYMKLEDYEKALVDCEWALKCDEKCTKAYFHMGKANLALKNYSVSRECYKKILEINPKLQTQVKGYLNQVDLQEKADLQEKEAHELLDSGKNTAVTTKNLLETLSKPDQIPLFYAGGIEILTEMINECTEQTLFRMHNGFSIISDNEVIRRCFSTAGNDAVEEMVCVSVLKLWQAVCSRNEENQRVLVIHHDRARLLAALLSSKVLAIRQQSFALLLHLAQTESGRSLIINHLDLTRLLEALVSFLDFSDKEANTAMGLFTDLALEERFQVWFQANLPGVLPALTGVLKTDPKVSSSSALCQCIAIMGNLSAEPTTRRHMAACEEFGDGCLSLLARCEEDVDLFREVIYTLLGLMMNLCLQAPFVSEVWAVEVSRRCLSLLNSQDGGILTRAAGVLSRTLSSSLKIVEEALRAGVVKKMMKFLKTGGETASRYAIKILAICTNSYHEAREEVIRLDKKLSVMMKLLSSEDEVLVGNAALCLGNCMEVPNVASSLLKTDLLQVLLKLAGSDTQKTAVQVNAGIALGKLCTAEPRFAAQLRKLHGLEILNSTMKYISDS.

Thr71 carries the phosphothreonine modification. TPR repeat units follow at residues 106 to 139 (ADAL…LKDM), 140 to 173 (KVLY…DEKC), and 174 to 207 (TKAY…NPKL).

Expressed in testis and in epithelial cells of trachea and bronchial tube.

The protein resides in the cytoplasm. In terms of biological role, cytoplasmic protein that plays a role in the proper assembly of dynein arm complexes in motile cilia in both respiratory cells and sperm flagella. The chain is Tetratricopeptide repeat protein 12 (TTC12) from Homo sapiens (Human).